Here is a 1385-residue protein sequence, read N- to C-terminus: MEVLMAERANLVFHNKVIDGTAMKRLISRLIDHFGMAYTSHILDQVKTLGFQQATATSISLGIDDLLTISSKGWLVQDAEQQSLLLEKHHRYGNVHAVEKLRQSIEIWYATSEYLRQEMNPNFRMTDPSNPVHIMSFSGARGNVSQVHQLVGMRGLMSDPQGQMIDLPIQSNLREGLSLTEYTISCYGARKGVVDTAVRTSDAGYLTRRLVEVVQHVVVRRTDCGTIRGISISIRNGMTGRILIQTLIGRVLADDVYMGLRCIAARNQDIGIGLVNRFITSRAQPIYIRTPFTCRSTSWICRLCYGRSPTHGDLVELGEAVGIIAGQSIGEPGTQLTLRTFHTGGVFTGGTAEHVRAPFNGKIKFNEDLVHPTRTRHGHPAFLCYIDLYVTIESQDILHNVNIPPKSFILVQNDQYVESEQVIAEIRARTSTFSFKEKVRKHIYSDSEGEIHWSTDVYHVPEYTHGNVHLLPKTTHLWILSGGPGPCRRSIVPFSLHKDQDQMNLQSLSVEQRYISNLSVNNDRVRHKLFDLDPFWKKKGGVGYSGPDRILSNGHWDFIYPAILHENSNLLAKRRRNRFIISFQHDQEREKKLPPRSGIKIEIPINGILRRNSILAYFDDPRYRRSSSGITKYGTIEVDSIVKKDDLIEYRGAKELRPKYQMKVDPFFFIPEEVHILPGSSPIMVRNNSIIGVDTRITLNTRSRIGGLVRVERKKKRIELKIFSGDIHFPGETDKISRHSGILIPPETRKKNSKESKSKQLKNWIYVQRITPIKKKYFVSVRAVVIYEIADGIHLATLFPQDLLQERDNLQLRVVNYFLYGNGKPIRGISHKSIQLVRTCLVLNWDQDQNGSIEEVYASFVKVRANDLIRDFIRIDLVKSPISKRNDTAGSGLIPVNGSDRTNINPFCSKARIQSLSQHQGTVRTFLNRNKEGESFLVLSSSNCSRIGPFNGLKYHNLTKKESIQIKEDPMIPIRNSLGPFGTVPKIANFYSSYQLITHNEILLNKYLLLDNPKQTFEALKYYFMDENGIIYNPDPCSNIILNPFDSNWYFPHQDYCEETCTIISLGQFICENVCISKHGPRIKSGQVLIVHVDSLVIRSAKPHLATPGATVHGHYGEILYEGNTLVTFIYEKSRSGDITQGLPKVEQVLEVRSIDSISMNLEKRFEGWGERMTGILGIPWGFLIGAELTIAQSHFSLVNKIQRVYRSQGVQIHNRHIEIIVRQITSKVLVSEDGMSNVFSPGELIGLLRAERTGRALEEAICYRAVLLGITRASLNTQSFISEASFQETTRVLAKAALRGRIDWLKGLKENVVLGGMIPVGTGFKGLVHHSREHNNIPFEIQKKSRFEGEMRDILFPHRELFCSCLETNFHDTSEQSFMGLNDS.

The Zn(2+) site is built by C224, C294, C301, and C304.

It belongs to the RNA polymerase beta' chain family. RpoC2 subfamily. In terms of assembly, in plastids the minimal PEP RNA polymerase catalytic core is composed of four subunits: alpha, beta, beta', and beta''. When a (nuclear-encoded) sigma factor is associated with the core the holoenzyme is formed, which can initiate transcription. It depends on Zn(2+) as a cofactor.

The protein localises to the plastid. The protein resides in the chloroplast. The enzyme catalyses RNA(n) + a ribonucleoside 5'-triphosphate = RNA(n+1) + diphosphate. Functionally, DNA-dependent RNA polymerase catalyzes the transcription of DNA into RNA using the four ribonucleoside triphosphates as substrates. This Illicium oligandrum (Star anise) protein is DNA-directed RNA polymerase subunit beta''.